We begin with the raw amino-acid sequence, 171 residues long: Inosine/xanthosine triphosphatase (171 aa).

8-13 (TTNPAK) serves as a coordination point for substrate. Positions 38 and 68 each coordinate Mg(2+).

The protein belongs to the YjjX NTPase family. As to quaternary structure, homodimer. It depends on Mg(2+) as a cofactor. Mn(2+) is required as a cofactor.

The enzyme catalyses XTP + H2O = XDP + phosphate + H(+). It catalyses the reaction ITP + H2O = IDP + phosphate + H(+). In terms of biological role, phosphatase that hydrolyzes non-canonical purine nucleotides such as XTP and ITP to their respective diphosphate derivatives. Probably excludes non-canonical purines from DNA/RNA precursor pool, thus preventing their incorporation into DNA/RNA and avoiding chromosomal lesions. The polypeptide is Inosine/xanthosine triphosphatase (Cronobacter sakazakii (strain ATCC BAA-894) (Enterobacter sakazakii)).